Consider the following 124-residue polypeptide: Translation initiation factor 5A (124 aa).

Lysine 36 is subject to Hypusine.

This sequence belongs to the eIF-5A family.

The protein localises to the cytoplasm. Functionally, functions by promoting the formation of the first peptide bond. This chain is Translation initiation factor 5A, found in Haloquadratum walsbyi (strain DSM 16790 / HBSQ001).